Reading from the N-terminus, the 110-residue chain is Serum amyloid A protein (110 aa).

The tract at residues 73 to 110 is disordered; that stretch reads GGSGRGAEDSRADQAANEWGRSGKDPNHFRPHGLPDKY. Residues 93–110 show a composition bias toward basic and acidic residues; that stretch reads RSGKDPNHFRPHGLPDKY.

It belongs to the SAA family. In terms of processing, this protein is the precursor of amyloid protein A, which is formed by the removal of residues from the C-terminal end. In terms of tissue distribution, expressed by the liver; secreted in plasma.

Its function is as follows. Major acute phase reactant. Apolipoprotein of the HDL complex. This is Serum amyloid A protein (SAA1) from Equus caballus (Horse).